The chain runs to 443 residues: MARRAADKRVNLAVSRIIPPILIGVFGYASYAITKPLCVDYLIHPAHHYDRRSRSGAGAAILAIYYVLLIPVLATYLRLLYNVVLSPGYLPRGTACTQNQTGSDGSKHRHRRHRRRKSGHHLSKTTEKTDRSDGGDVERGLEYSARAKAYPLDAEGLESFYTKDVFVCQPDGRPVYCSTCCQFKTDRAHHCREVDRCVRKMDHFCPWVGGVVSETSFKFFIQFIVYTMIYCIFVLIVFAIYTAELRREAGRTNVHWIVCLALSSLFGFFTFGVAISSVQLAANNLTTIENLNRRSAVWTLAIRVPRHILSKRWAPTFRTITYPLPPVPPAESEVARESPGGEQHVFAILQTLPGENPFDLGSPLKNIQQVMGFSLLEWLLPIKQSPCADHSSNESAFALGPVVTRLKKEAGLEVSTESESADPVGAAETPQHEQRRGKHRRRN.

2 helical membrane-spanning segments follow: residues 17 to 37 (IIPP…TKPL) and 57 to 77 (AGAA…ATYL). A disordered region spans residues 96–137 (CTQNQTGSDGSKHRHRRHRRRKSGHHLSKTTEKTDRSDGGDV). Residues 107-123 (KHRHRRHRRRKSGHHLS) show a composition bias toward basic residues. A compositionally biased stretch (basic and acidic residues) spans 124-137 (KTTEKTDRSDGGDV). Residues 175-225 (VYCSTCCQFKTDRAHHCREVDRCVRKMDHFCPWVGGVVSETSFKFFIQFIV) form the DHHC domain. Transmembrane regions (helical) follow at residues 220 to 240 (FIQF…VFAI) and 256 to 276 (WIVC…VAIS). Residues 410 to 443 (AGLEVSTESESADPVGAAETPQHEQRRGKHRRRN) form a disordered region.

It belongs to the DHHC palmitoyltransferase family. PFA5 subfamily. Autopalmitoylated.

It localises to the membrane. It catalyses the reaction L-cysteinyl-[protein] + hexadecanoyl-CoA = S-hexadecanoyl-L-cysteinyl-[protein] + CoA. The chain is Palmitoyltransferase pfa5 (pfa5) from Aspergillus fumigatus (strain ATCC MYA-4609 / CBS 101355 / FGSC A1100 / Af293) (Neosartorya fumigata).